The sequence spans 297 residues: 3-methyl-2-oxobutanoate hydroxymethyltransferase (297 aa).

The span at 1 to 15 (MSEQISEQSEQNVYG) shows a compositional bias: polar residues. The interval 1–40 (MSEQISEQSEQNVYGASSPVPAGESSPSAASAPRTKVRTH) is disordered. Over residues 16–33 (ASSPVPAGESSPSAASAP) the composition is skewed to low complexity. Mg(2+) contacts are provided by D78 and D117. Residues 78-79 (DS), D117, and K147 each bind 3-methyl-2-oxobutanoate. E149 is a Mg(2+) binding site. E215 (proton acceptor) is an active-site residue.

Belongs to the PanB family. As to quaternary structure, homodecamer; pentamer of dimers. The cofactor is Mg(2+).

Its subcellular location is the cytoplasm. The enzyme catalyses 3-methyl-2-oxobutanoate + (6R)-5,10-methylene-5,6,7,8-tetrahydrofolate + H2O = 2-dehydropantoate + (6S)-5,6,7,8-tetrahydrofolate. It functions in the pathway cofactor biosynthesis; (R)-pantothenate biosynthesis; (R)-pantoate from 3-methyl-2-oxobutanoate: step 1/2. Catalyzes the reversible reaction in which hydroxymethyl group from 5,10-methylenetetrahydrofolate is transferred onto alpha-ketoisovalerate to form ketopantoate. The protein is 3-methyl-2-oxobutanoate hydroxymethyltransferase of Mycobacterium marinum (strain ATCC BAA-535 / M).